The chain runs to 726 residues: Putative tyrosine-protein kinase AmsA (726 aa).

The next 2 helical transmembrane spans lie at 32-52 (WMIVAVSVLFTLMGTLYSLFA) and 425-445 (ILIVAGSLILGLVVSVGLVLM).

Belongs to the etk/wzc family.

It is found in the cell inner membrane. The catalysed reaction is L-tyrosyl-[protein] + ATP = O-phospho-L-tyrosyl-[protein] + ADP + H(+). It participates in glycan metabolism; exopolysaccharide biosynthesis. Involved in the biosynthesis of amylovoran which functions as a virulence factor. The chain is Putative tyrosine-protein kinase AmsA (amsA) from Erwinia amylovora (Fire blight bacteria).